The sequence spans 385 residues: 1-deoxy-D-xylulose 5-phosphate reductoisomerase 1 (385 aa).

NADPH contacts are provided by T11, G12, S13, I14, N39, and N122. K123 contacts 1-deoxy-D-xylulose 5-phosphate. Residue E124 participates in NADPH binding. D148 lines the Mn(2+) pocket. 1-deoxy-D-xylulose 5-phosphate-binding residues include S149, E150, S174, and H197. Residue E150 participates in Mn(2+) binding. G203 lines the NADPH pocket. 1-deoxy-D-xylulose 5-phosphate is bound by residues S210, N215, K216, and E219. E219 lines the Mn(2+) pocket.

This sequence belongs to the DXR family. The cofactor is Mg(2+). Mn(2+) is required as a cofactor.

The enzyme catalyses 2-C-methyl-D-erythritol 4-phosphate + NADP(+) = 1-deoxy-D-xylulose 5-phosphate + NADPH + H(+). It functions in the pathway isoprenoid biosynthesis; isopentenyl diphosphate biosynthesis via DXP pathway; isopentenyl diphosphate from 1-deoxy-D-xylulose 5-phosphate: step 1/6. Functionally, catalyzes the NADPH-dependent rearrangement and reduction of 1-deoxy-D-xylulose-5-phosphate (DXP) to 2-C-methyl-D-erythritol 4-phosphate (MEP). The polypeptide is 1-deoxy-D-xylulose 5-phosphate reductoisomerase 1 (Bacillus thuringiensis subsp. konkukian (strain 97-27)).